We begin with the raw amino-acid sequence, 476 residues long: Cysteine--tRNA ligase (476 aa).

Zn(2+) is bound at residue Cys-28. The 'HIGH' region motif lies at 30–40 (VTTYDFCHIGH). Zn(2+)-binding residues include Cys-215, His-241, and Glu-245. The 'KMSKS' region signature appears at 273 to 277 (KMSKS). Residue Lys-276 participates in ATP binding.

It belongs to the class-I aminoacyl-tRNA synthetase family. In terms of assembly, monomer. Zn(2+) serves as cofactor.

Its subcellular location is the cytoplasm. The catalysed reaction is tRNA(Cys) + L-cysteine + ATP = L-cysteinyl-tRNA(Cys) + AMP + diphosphate. The sequence is that of Cysteine--tRNA ligase from Buchnera aphidicola subsp. Cinara cedri (strain Cc).